The primary structure comprises 411 residues: S-adenosylmethionine synthase (411 aa).

H15 provides a ligand contact to ATP. D17 contacts Mg(2+). E43 lines the K(+) pocket. Residues E56 and Q99 each contribute to the L-methionine site. The tract at residues 99 to 109 (QSQEIAQGVDT) is flexible loop. ATP-binding positions include 179–181 (DGK), D260, 266–267 (RK), A283, and K287. L-methionine is bound at residue D260. Residue K291 coordinates L-methionine.

The protein belongs to the AdoMet synthase family. As to quaternary structure, homotetramer; dimer of dimers. Requires Mg(2+) as cofactor. K(+) serves as cofactor.

The protein localises to the cytoplasm. It carries out the reaction L-methionine + ATP + H2O = S-adenosyl-L-methionine + phosphate + diphosphate. It functions in the pathway amino-acid biosynthesis; S-adenosyl-L-methionine biosynthesis; S-adenosyl-L-methionine from L-methionine: step 1/1. Catalyzes the formation of S-adenosylmethionine (AdoMet) from methionine and ATP. The overall synthetic reaction is composed of two sequential steps, AdoMet formation and the subsequent tripolyphosphate hydrolysis which occurs prior to release of AdoMet from the enzyme. The polypeptide is S-adenosylmethionine synthase (Corynebacterium jeikeium (strain K411)).